The chain runs to 372 residues: tRNA-specific 2-thiouridylase MnmA (372 aa).

ATP-binding positions include 13–20 (GMSGGVDS) and methionine 39. The interaction with target base in tRNA stretch occupies residues 99–101 (NPD). Cysteine 104 acts as the Nucleophile in catalysis. Cysteine 104 and cysteine 200 are joined by a disulfide. ATP is bound at residue glycine 128. Positions 150 to 152 (KDQ) are interaction with tRNA. Cysteine 200 functions as the Cysteine persulfide intermediate in the catalytic mechanism. The segment at 310-311 (RY) is interaction with tRNA.

It belongs to the MnmA/TRMU family.

The protein resides in the cytoplasm. It catalyses the reaction S-sulfanyl-L-cysteinyl-[protein] + uridine(34) in tRNA + AH2 + ATP = 2-thiouridine(34) in tRNA + L-cysteinyl-[protein] + A + AMP + diphosphate + H(+). Functionally, catalyzes the 2-thiolation of uridine at the wobble position (U34) of tRNA, leading to the formation of s(2)U34. The polypeptide is tRNA-specific 2-thiouridylase MnmA (Bacillus pumilus (strain SAFR-032)).